The sequence spans 680 residues: DNA ligase (680 aa).

Residues 35–39 (DADFD), 86–87 (SL), and E111 contribute to the NAD(+) site. Catalysis depends on K113, which acts as the N6-AMP-lysine intermediate. The NAD(+) site is built by R134, E174, K290, and K314. Zn(2+) is bound by residues C408, C411, C427, and C433. In terms of domain architecture, BRCT spans 597-680 (VAEQTLEGLT…RLLNTGSADE (84 aa)).

Belongs to the NAD-dependent DNA ligase family. LigA subfamily. Requires Mg(2+) as cofactor. The cofactor is Mn(2+).

The catalysed reaction is NAD(+) + (deoxyribonucleotide)n-3'-hydroxyl + 5'-phospho-(deoxyribonucleotide)m = (deoxyribonucleotide)n+m + AMP + beta-nicotinamide D-nucleotide.. In terms of biological role, DNA ligase that catalyzes the formation of phosphodiester linkages between 5'-phosphoryl and 3'-hydroxyl groups in double-stranded DNA using NAD as a coenzyme and as the energy source for the reaction. It is essential for DNA replication and repair of damaged DNA. This chain is DNA ligase, found in Corynebacterium glutamicum (strain R).